The primary structure comprises 475 residues: Protein EARLY HEADING DATE 2 (475 aa).

Positions 1–16 (MLLSDLSSDQEATGSN) are enriched in polar residues. The interval 1-26 (MLLSDLSSDQEATGSNSHGGGGGDRM) is disordered. 2 C2H2-type zinc fingers span residues 105–127 (FVCE…RRGH) and 155–185 (YVCP…SRKH). 2 short sequence motifs (nuclear localization signal) span residues 123 to 130 (HRRGHNLP) and 177 to 184 (IKKHFSRK). The C2H2-type 2; degenerate zinc-finger motif lies at 190–213 (WRCERCGKRYAVHSDWKAHVKNCG). Cysteine 192, cysteine 195, histidine 208, cysteine 212, cysteine 219, cysteine 221, histidine 234, and cysteine 238 together coordinate Zn(2+). The segment at 217–240 (YRCDCGILFSRKDSLLTHRAFCDA) adopts a CCHC-type 2; atypical zinc-finger fold. Positions 227–239 (RKDSLLTHRAFCD) are SHR-binding.

In terms of tissue distribution, mostly expressed in developing leaves (more in sheaths than in blades, especially in the outer epidermal cell of immature leaves and in the region immediately beneath the meristem where internodes are visible) and panicles, and, at very low levels, around the shoot apex and in roots.

It localises to the nucleus. Transcription activator that acts as a flowering master switch in both long and short days, independently of the circadian clock. Promotes flowering upstream of HD1 by up-regulating FTL1, FTL4, FTL5, FTL6, EHD1, HD3A and RFT1. Seems to repress FTL11 expression. May recognize the consensus motif 5'-TTTGTCGTAAT-3' in target gene promoters. This chain is Protein EARLY HEADING DATE 2, found in Oryza sativa subsp. japonica (Rice).